The primary structure comprises 231 residues: Putative cobalt transport protein CbiM 1 (231 aa).

The next 6 membrane-spanning stretches (helical) occupy residues 6-26 (GFLP…FLIY), 41-61 (VLPL…VDIP), 79-99 (FFGP…QALL), 107-127 (TLGA…WLVF), 136-156 (VPLG…TYLI), and 172-192 (LTAF…ISII).

This sequence belongs to the CbiM family. As to quaternary structure, forms an energy-coupling factor (ECF) transporter complex composed of an ATP-binding protein (A component, CbiO), a transmembrane protein (T component, CbiQ) and 2 possible substrate-capture proteins (S components, CbiM and CbiN) of unknown stoichimetry.

The protein resides in the cell membrane. It functions in the pathway cofactor biosynthesis; adenosylcobalamin biosynthesis. Its function is as follows. Part of the energy-coupling factor (ECF) transporter complex CbiMNOQ involved in cobalt import. This Methanocorpusculum labreanum (strain ATCC 43576 / DSM 4855 / Z) protein is Putative cobalt transport protein CbiM 1.